The primary structure comprises 185 residues: Kappa-casein (185 aa).

The first 20 residues, 1-20 (MKSFFLVVNILALTLPFLGA), serve as a signal peptide directing secretion. An O-linked (GalNAc...) threonine glycan is attached at T143. Phosphoserine; alternate is present on S161. A glycan (O-linked (GalNAc...) serine; alternate) is linked at S161. T178 carries an O-linked (GalNAc...) threonine glycan. S179 carries the post-translational modification Phosphoserine.

This sequence belongs to the kappa-casein family. Mammary gland specific. Secreted in milk.

It is found in the secreted. Functionally, kappa-casein stabilizes micelle formation, preventing casein precipitation in milk. This Equus caballus (Horse) protein is Kappa-casein (CSN3).